The sequence spans 48 residues: uncharacterized protein (48 aa).

Positions 1 to 21 are cleaved as a signal peptide; the sequence is MLENNVFRLMILMGGVIALIA.

This is an uncharacterized protein from Bacillus anthracis.